The following is a 281-amino-acid chain: Merozoite surface protein 2 (281 aa).

The signal sequence occupies residues M1–I20. N22 and N36 each carry an N-linked (GlcNAc...) asparagine glycan. A disordered region spans residues S42–N242. Residues E44–S207 are polymorphic region. 3 repeat units span residues G51–A58, G59–A66, and G67–A74. Positions G51–A74 are 3 X 8 AA tandem repeats of G-A-S-G-R-A-G-A. Gly residues predominate over residues G54–A76. The span at G77–N133 shows a compositional bias: low complexity. 2 stretches are compositionally biased toward polar residues: residues N150–P174 and K181–P209. An N-linked (GlcNAc...) asparagine glycan is attached at N158. Residue N230 is glycosylated (N-linked (GlcNAc...) asparagine). A disulfide bridge connects residues C238 and C246. N254 and N255 each carry an N-linked (GlcNAc...) asparagine glycan. Residue N255 is the site of GPI-anchor amidated asparagine attachment. Positions S256 to I281 are cleaved as a propeptide — removed in mature form.

The protein localises to the cell membrane. In terms of biological role, may play a role in the merozoite attachment to the erythrocyte. The chain is Merozoite surface protein 2 from Plasmodium falciparum (isolate thtn / Thailand).